A 65-amino-acid polypeptide reads, in one-letter code: Large ribosomal subunit protein bL35 (65 aa).

2 disordered regions span residues 1–23 and 36–65; these read MPKL…GGFK and MTTK…MPYA. Positions 54-65 are enriched in polar residues; it reads DTTSLVQQMPYA.

This sequence belongs to the bacterial ribosomal protein bL35 family.

In Francisella tularensis subsp. tularensis (strain FSC 198), this protein is Large ribosomal subunit protein bL35.